We begin with the raw amino-acid sequence, 707 residues long: B-cell lymphoma 6 protein homolog (707 aa).

The BTB domain maps to Thr32–Glu99. Residues His275–Ser350 are disordered. The segment covering Lys299–Leu315 has biased composition (basic and acidic residues). Over residues Ser331–Ser350 the composition is skewed to polar residues. Position 334 is a phosphoserine (Ser334). Position 344 is a phosphoserine; by MAPK1 (Ser344). Phosphoserine is present on Ser362. The tract at residues Lys377 to Lys380 is required for interaction with NuRD complex and for transcriptional repressor activity. An N6-acetyllysine; by EP300 modification is found at Lys380. At Ser405 the chain carries Phosphoserine. A disordered region spans residues Ser405–Leu469. The span at Tyr409 to Glu420 shows a compositional bias: pro residues. The segment covering Asp425–Asn452 has biased composition (polar residues). The segment covering Ser458–Ser467 has biased composition (low complexity). 6 C2H2-type zinc fingers span residues Phe519 to His542, Tyr547 to His569, Tyr575 to His597, Tyr603 to His625, Tyr631 to His653, and Tyr659 to His682.

In terms of assembly, homodimer. Interacts (via BTB domain) with the corepressors BCOR, NCOR1 and SMRT/NCOR2; the interactions are direct. Forms preferably ternary complexes with BCOR and SMRT/NCOR2 on target gene promoters but, on enhancer elements, interacts with SMRT/NCOR2 and HDAC3 to repress proximal gene expression. Interacts with histone deacetylases HDAC2, HDAC5 and HDAC9 (via the catalytic domain). Interacts with ZBTB7 and BCL6B. Interacts with SCF(FBXO11) complex; the interaction is independent of phosphorylation and promotes ubiquitination. Interacts (when phosphorylated) with PIN1; the interaction is required for BCL6 degradation upon genotoxic stress. Interacts with ZBTB17; inhibits ZBTB17 transcriptional activity. Interacts with CTBP1, autoinhibits its transcriptional expression. Interacts with NOTCH1 NCID and SIRT1; leads to a epigenetic repression of selective NOTCH1-target genes. Interacts (nor via BTB domain neither acetylated) with the NuRD complex components CHD4, HDAC1, MBD3 and MTA3; the interaction with MTA3 inhibits BCL6 acetylation and is required for BCL6 transpriptional repression. Phosphorylated by MAPK1 in response to antigen receptor activation at Ser-334 and Ser-344. Phosphorylated by ATM in response to genotoxic stress. Phosphorylation induces its degradation by ubiquitin/proteasome pathway. In terms of processing, polyubiquitinated. Polyubiquitinated by SCF(FBXO11), leading to its degradation by the proteasome. Ubiquitinated by the SCF(FBXL17) complex, leading to its degradation by the proteasome: ubiquitination by the SCF(FBXL17) complex takes place when aberrant BTB domain dimers are formed. Post-translationally, acetylated at Lys-380 by EP300 which inhibits the interaction with NuRD complex and the transcriptional repressor function. Deacetylated by HDAC- and SIR2-dependent pathways. As to expression, expressed at least in germinal center B-cells of spleen.

The protein resides in the nucleus. Its function is as follows. Transcriptional repressor mainly required for germinal center (GC) formation and antibody affinity maturation which has different mechanisms of action specific to the lineage and biological functions. Forms complexes with different corepressors and histone deacetylases to repress the transcriptional expression of different subsets of target genes. Represses its target genes by binding directly to the DNA sequence 5'-TTCCTAGAA-3' (BCL6-binding site) or indirectly by repressing the transcriptional activity of transcription factors. In GC B-cells, represses genes that function in differentiation, inflammation, apoptosis and cell cycle control, also autoregulates its transcriptional expression and up-regulates, indirectly, the expression of some genes important for GC reactions, such as AICDA, through the repression of microRNAs expression, like miR155. An important function is to allow GC B-cells to proliferate very rapidly in response to T-cell dependent antigens and tolerate the physiological DNA breaks required for immunglobulin class switch recombination and somatic hypermutation without inducing a p53/TP53-dependent apoptotic response. In follicular helper CD4(+) T-cells (T(FH) cells), promotes the expression of T(FH)-related genes but inhibits the differentiation of T(H)1, T(H)2 and T(H)17 cells. Also required for the establishment and maintenance of immunological memory for both T- and B-cells. Suppresses macrophage proliferation through competition with STAT5 for STAT-binding motifs binding on certain target genes, such as CCL2 and CCND2. In response to genotoxic stress, controls cell cycle arrest in GC B-cells in both p53/TP53-dependedent and -independent manners. Besides, also controls neurogenesis through the alteration of the composition of NOTCH-dependent transcriptional complexes at selective NOTCH targets, such as HES5, including the recruitment of the deacetylase SIRT1 and resulting in an epigenetic silencing leading to neuronal differentiation. The sequence is that of B-cell lymphoma 6 protein homolog (Bcl6) from Mus musculus (Mouse).